The sequence spans 75 residues: Penaeidin-3m (75 aa).

Positions 1 to 19 (MRLVVCLVFLASFALVCQG) are cleaved as a signal peptide. Gln20 bears the Pyrrolidone carboxylic acid mark. 3 disulfide bridges follow: Cys44–Cys59, Cys48–Cys66, and Cys60–Cys67. Ser74 is modified (serine amide).

This sequence belongs to the penaeidin family.

It is found in the cytoplasmic granule. Its function is as follows. Antibacterial and antifungal activity. Presents chitin-binding activity. The protein is Penaeidin-3m of Penaeus setiferus (Atlantic white shrimp).